Here is an 89-residue protein sequence, read N- to C-terminus: Small ribosomal subunit protein uS15 (89 aa).

It belongs to the universal ribosomal protein uS15 family. Part of the 30S ribosomal subunit. Forms a bridge to the 50S subunit in the 70S ribosome, contacting the 23S rRNA.

Functionally, one of the primary rRNA binding proteins, it binds directly to 16S rRNA where it helps nucleate assembly of the platform of the 30S subunit by binding and bridging several RNA helices of the 16S rRNA. In terms of biological role, forms an intersubunit bridge (bridge B4) with the 23S rRNA of the 50S subunit in the ribosome. This chain is Small ribosomal subunit protein uS15, found in Lactobacillus helveticus (strain DPC 4571).